The following is a 398-amino-acid chain: Probable peptidoglycan glycosyltransferase FtsW (398 aa).

The Cytoplasmic segment spans residues 1 to 20; sequence MSTQAIRGARGLVLKWGAGR. A helical transmembrane segment spans residues 21–41; that stretch reads FYLDTVLLSVSLGLMLFGFVM. Over 42 to 57 the chain is Periplasmic; the sequence is VSSASLHLGEKMASDS. A helical membrane pass occupies residues 58–78; that stretch reads FYFPKHQLVHILLGLAAGWGA. Topologically, residues 79 to 92 are cytoplasmic; it reads ARVRLDTLERHSRS. Residues 93–113 traverse the membrane as a helical segment; the sequence is LFWAGIALLVLVLIPGVGKSV. Residues 114 to 121 are Periplasmic-facing; that stretch reads NGSVRWIN. A helical transmembrane segment spans residues 122-142; it reads LFGLRVQVSEVFKLVAAIYVA. Residues 143–153 are Cytoplasmic-facing; that stretch reads GYISRHLDTVR. A helical transmembrane segment spans residues 154–174; it reads TSVKGMIFPLSLLAIGAVLLL. At 175–177 the chain is on the periplasmic side; that stretch reads KEP. Residues 178-198 form a helical membrane-spanning segment; sequence DFGATAVVMATALGMLFLAGA. Residue arginine 199 is a topological domain, cytoplasmic. A helical membrane pass occupies residues 200 to 220; that stretch reads LWVFVGLLGLVAVAGTVLIYT. Residues 221 to 289 lie on the Periplasmic side of the membrane; that stretch reads AEYRLRRVLS…LFSVIGEELG (69 aa). The chain crosses the membrane as a helical span at residues 290–310; sequence LWGATTVILLFAIVVWRALAI. Topologically, residues 311 to 318 are cytoplasmic; sequence GRLAERSG. The chain crosses the membrane as a helical span at residues 319-339; that stretch reads NLFAAFLAYGIGIWLGLQSFI. The Periplasmic portion of the chain corresponds to 340–355; it reads NMGVNMGMLPTKGLTL. The helical transmembrane segment at 356–376 threads the bilayer; sequence PLMSYGGGSMMVVCAAIGLLF. The Cytoplasmic portion of the chain corresponds to 377 to 398; that stretch reads RIRSEAVASFLGNGRKGLWPGV.

Belongs to the SEDS family. FtsW subfamily.

It localises to the cell inner membrane. The enzyme catalyses [GlcNAc-(1-&gt;4)-Mur2Ac(oyl-L-Ala-gamma-D-Glu-L-Lys-D-Ala-D-Ala)](n)-di-trans,octa-cis-undecaprenyl diphosphate + beta-D-GlcNAc-(1-&gt;4)-Mur2Ac(oyl-L-Ala-gamma-D-Glu-L-Lys-D-Ala-D-Ala)-di-trans,octa-cis-undecaprenyl diphosphate = [GlcNAc-(1-&gt;4)-Mur2Ac(oyl-L-Ala-gamma-D-Glu-L-Lys-D-Ala-D-Ala)](n+1)-di-trans,octa-cis-undecaprenyl diphosphate + di-trans,octa-cis-undecaprenyl diphosphate + H(+). It functions in the pathway cell wall biogenesis; peptidoglycan biosynthesis. In terms of biological role, peptidoglycan polymerase that is essential for cell division. The protein is Probable peptidoglycan glycosyltransferase FtsW of Methylococcus capsulatus (strain ATCC 33009 / NCIMB 11132 / Bath).